The primary structure comprises 162 residues: Precursor protein UG (162 aa).

Residues 1 to 19 (MERILLCFIVATLVAISMA) form the signal peptide. A propeptide spanning residues 20 to 23 (NPRP) is cleaved from the precursor. Disulfide bonds link C30–C42 and C33–C49. Positions 56-59 (VPKP) are excised as a propeptide. Intrachain disulfides connect C66/C78 and C69/C85. Residues 92 to 95 (VPKP) constitute a propeptide that is removed on maturation. 2 disulfides stabilise this stretch: C102-C114 and C105-C121. A propeptide spanning residues 128-131 (VPKP) is cleaved from the precursor. 2 cysteine pairs are disulfide-bonded: C138–C150 and C141–C157.

It belongs to the sea anemone BBH family.

Its subcellular location is the secreted. It localises to the nematocyst. Functionally, affects the ASIC3 channel (ACCN3) and produces analgesic effects. It produces a reversible inhibition effect on both the transient and the sustained current of human ASIC3 channels expressed in X.laevis oocytes. It completely blocks the transient component (IC(50)=10 uM) and partially (48%) inhibits the amplitude of the sustained component (IC(50)=1.44 uM). Using in vivo tests in mice, it reverses inflammatory and acid-induced pain. In terms of biological role, does not affect the ASIC3 channel. Does not cause lethality or paralysis of noble crayfish (A.astacus) at a dose of 1 mg/kg. The chain is Precursor protein UG from Urticina grebelnyi (Painted anemone).